A 400-amino-acid chain; its full sequence is Acetate kinase (400 aa).

Asparagine 7 lines the Mg(2+) pocket. Residue lysine 14 participates in ATP binding. A substrate-binding site is contributed by arginine 91. Aspartate 148 functions as the Proton donor/acceptor in the catalytic mechanism. Residues 208–212 (HLGNG), 284–286 (DMR), and 332–336 (GVGEN) contribute to the ATP site. Glutamate 384 contributes to the Mg(2+) binding site.

It belongs to the acetokinase family. Homodimer. Mg(2+) is required as a cofactor. Mn(2+) serves as cofactor.

The protein localises to the cytoplasm. The catalysed reaction is acetate + ATP = acetyl phosphate + ADP. It participates in metabolic intermediate biosynthesis; acetyl-CoA biosynthesis; acetyl-CoA from acetate: step 1/2. In terms of biological role, catalyzes the formation of acetyl phosphate from acetate and ATP. Can also catalyze the reverse reaction. The chain is Acetate kinase from Coprothermobacter proteolyticus (strain ATCC 35245 / DSM 5265 / OCM 4 / BT).